The primary structure comprises 374 residues: Carbamoyl phosphate synthase small chain (374 aa).

The segment at 1–186 (MTEPAILVLE…DRNEWKRAAP (186 aa)) is CPSase. L-glutamine-binding residues include Ser47, Gly237, and Gly239. Residues 189 to 374 (KVVAYDYGVK…RFITMMAAQS (186 aa)) enclose the Glutamine amidotransferase type-1 domain. Cys265 acts as the Nucleophile in catalysis. L-glutamine contacts are provided by Leu266, Gln269, Asn307, Gly309, and Phe310. Active-site residues include His349 and Glu351.

This sequence belongs to the CarA family. As to quaternary structure, composed of two chains; the small (or glutamine) chain promotes the hydrolysis of glutamine to ammonia, which is used by the large (or ammonia) chain to synthesize carbamoyl phosphate. Tetramer of heterodimers (alpha,beta)4.

The enzyme catalyses hydrogencarbonate + L-glutamine + 2 ATP + H2O = carbamoyl phosphate + L-glutamate + 2 ADP + phosphate + 2 H(+). The catalysed reaction is L-glutamine + H2O = L-glutamate + NH4(+). The protein operates within amino-acid biosynthesis; L-arginine biosynthesis; carbamoyl phosphate from bicarbonate: step 1/1. It functions in the pathway pyrimidine metabolism; UMP biosynthesis via de novo pathway; (S)-dihydroorotate from bicarbonate: step 1/3. Small subunit of the glutamine-dependent carbamoyl phosphate synthetase (CPSase). CPSase catalyzes the formation of carbamoyl phosphate from the ammonia moiety of glutamine, carbonate, and phosphate donated by ATP, constituting the first step of 2 biosynthetic pathways, one leading to arginine and/or urea and the other to pyrimidine nucleotides. The small subunit (glutamine amidotransferase) binds and cleaves glutamine to supply the large subunit with the substrate ammonia. This is Carbamoyl phosphate synthase small chain from Xylella fastidiosa (strain 9a5c).